Here is a 352-residue protein sequence, read N- to C-terminus: Phenylalanine--tRNA ligase alpha subunit (352 aa).

Glu258 is a binding site for Mg(2+).

It belongs to the class-II aminoacyl-tRNA synthetase family. Phe-tRNA synthetase alpha subunit type 1 subfamily. As to quaternary structure, tetramer of two alpha and two beta subunits. The cofactor is Mg(2+).

The protein localises to the cytoplasm. The enzyme catalyses tRNA(Phe) + L-phenylalanine + ATP = L-phenylalanyl-tRNA(Phe) + AMP + diphosphate + H(+). The polypeptide is Phenylalanine--tRNA ligase alpha subunit (Staphylococcus aureus (strain bovine RF122 / ET3-1)).